We begin with the raw amino-acid sequence, 120 residues long: NAD(P)H-quinone oxidoreductase subunit 3, chloroplastic (120 aa).

The next 3 helical transmembrane spans lie at Ile-9–Gly-29, Met-64–Val-84, and Ile-88–Ser-108.

This sequence belongs to the complex I subunit 3 family. NDH is composed of at least 16 different subunits, 5 of which are encoded in the nucleus.

The protein resides in the plastid. The protein localises to the chloroplast thylakoid membrane. The enzyme catalyses a plastoquinone + NADH + (n+1) H(+)(in) = a plastoquinol + NAD(+) + n H(+)(out). It catalyses the reaction a plastoquinone + NADPH + (n+1) H(+)(in) = a plastoquinol + NADP(+) + n H(+)(out). Functionally, NDH shuttles electrons from NAD(P)H:plastoquinone, via FMN and iron-sulfur (Fe-S) centers, to quinones in the photosynthetic chain and possibly in a chloroplast respiratory chain. The immediate electron acceptor for the enzyme in this species is believed to be plastoquinone. Couples the redox reaction to proton translocation, and thus conserves the redox energy in a proton gradient. This is NAD(P)H-quinone oxidoreductase subunit 3, chloroplastic from Nymphaea alba (White water-lily).